Reading from the N-terminus, the 233-residue chain is MNKILLQCDNLCKRYQEGSVQTDVLHNVSFSVGEGEMMAIVGSSGSGKSTLLHLLGGLDTPTSGDVIFNGQPMSKLSSAAKAELRNQKLGFIYQFHHLLPDFTALENVAMPLLIGKKKPAEINSCALEMLKAVGLEHRANHRPSELSGGERQRVAIARALVNNPRLVLADEPTGNLDARNADSIFQLLGELNRLQGTAFLVVTHDLQLAKRMSRQLEMRDGRLTAELSLMGAE.

Residues 6 to 233 (LQCDNLCKRY…TAELSLMGAE (228 aa)) form the ABC transporter domain. 42–49 (GSSGSGKS) contributes to the ATP binding site.

It belongs to the ABC transporter superfamily. Lipoprotein translocase (TC 3.A.1.125) family. In terms of assembly, the complex is composed of two ATP-binding proteins (LolD) and two transmembrane proteins (LolC and LolE).

The protein localises to the cell inner membrane. Its function is as follows. Part of the ABC transporter complex LolCDE involved in the translocation of mature outer membrane-directed lipoproteins, from the inner membrane to the periplasmic chaperone, LolA. Responsible for the formation of the LolA-lipoprotein complex in an ATP-dependent manner. This is Lipoprotein-releasing system ATP-binding protein LolD from Shigella boydii serotype 4 (strain Sb227).